Here is a 312-residue protein sequence, read N- to C-terminus: MIEFKKPNITVVDQEDSYGKFVVEPLERGFGTTLGNSLRRVLLTSVPGTGLVKVKIDGILHEFTTVPGVKEDVTKIILNLKKLELRAYTEEVKTIELDVEGPATVTAEDLKADADVEVLNPDQYICTIAQGGHLHMWIDVCNGRGYVPASENKTAEMSIGDIPVDSLFSPIEKVNYQVESTRVGKREDFDKLTMEIWTNGSIAPNDALNFAARVLVEHFKAFESADAAAEIGEVMVEQENDQKEKKLEMTIEDLDLSVRSYNCLKRAGINTLQDLTVKSEAEMMRVRNLGRKSLEEVKNKLADLGLSLRQED.

The alpha N-terminal domain (alpha-NTD) stretch occupies residues 1-226 (MIEFKKPNIT…EHFKAFESAD (226 aa)). The segment at 243–312 (KEKKLEMTIE…DLGLSLRQED (70 aa)) is alpha C-terminal domain (alpha-CTD).

The protein belongs to the RNA polymerase alpha chain family. As to quaternary structure, homodimer. The RNAP catalytic core consists of 2 alpha, 1 beta, 1 beta' and 1 omega subunit. When a sigma factor is associated with the core the holoenzyme is formed, which can initiate transcription.

It catalyses the reaction RNA(n) + a ribonucleoside 5'-triphosphate = RNA(n+1) + diphosphate. In terms of biological role, DNA-dependent RNA polymerase catalyzes the transcription of DNA into RNA using the four ribonucleoside triphosphates as substrates. In Lactobacillus delbrueckii subsp. bulgaricus (strain ATCC BAA-365 / Lb-18), this protein is DNA-directed RNA polymerase subunit alpha.